The primary structure comprises 635 residues: Chaperone protein HtpG (635 aa).

The interval 1 to 344 is a; substrate-binding; sequence MSETATTNKE…SNDLPLNVSR (344 aa). Positions 345 to 561 are b; that stretch reads EILQDNKITQ…DYEMGTQMAK (217 aa). A c region spans residues 562–635; the sequence is LLAAAGQPVP…AVNQLLAPSH (74 aa).

This sequence belongs to the heat shock protein 90 family. As to quaternary structure, homodimer.

The protein resides in the cytoplasm. Its function is as follows. Molecular chaperone. Has ATPase activity. The protein is Chaperone protein HtpG of Vibrio cholerae serotype O1 (strain ATCC 39541 / Classical Ogawa 395 / O395).